The following is a 430-amino-acid chain: 3-phosphoshikimate 1-carboxyvinyltransferase (430 aa).

The 3-phosphoshikimate site is built by lysine 23, serine 24, and arginine 28. A phosphoenolpyruvate-binding site is contributed by lysine 23. 2 residues coordinate phosphoenolpyruvate: glycine 95 and arginine 123. 4 residues coordinate 3-phosphoshikimate: serine 169, glutamine 171, aspartate 315, and lysine 342. Glutamine 171 is a phosphoenolpyruvate binding site. Residue aspartate 315 is the Proton acceptor of the active site. Phosphoenolpyruvate-binding residues include arginine 346 and arginine 388.

Belongs to the EPSP synthase family. Monomer.

It is found in the cytoplasm. It carries out the reaction 3-phosphoshikimate + phosphoenolpyruvate = 5-O-(1-carboxyvinyl)-3-phosphoshikimate + phosphate. It participates in metabolic intermediate biosynthesis; chorismate biosynthesis; chorismate from D-erythrose 4-phosphate and phosphoenolpyruvate: step 6/7. Functionally, catalyzes the transfer of the enolpyruvyl moiety of phosphoenolpyruvate (PEP) to the 5-hydroxyl of shikimate-3-phosphate (S3P) to produce enolpyruvyl shikimate-3-phosphate and inorganic phosphate. The sequence is that of 3-phosphoshikimate 1-carboxyvinyltransferase from Streptococcus pyogenes serotype M1.